The primary structure comprises 293 residues: Ribosomal protein L11 methyltransferase (293 aa).

Residues Thr145, Gly166, Asp188, and Asn230 each contribute to the S-adenosyl-L-methionine site.

Belongs to the methyltransferase superfamily. PrmA family.

It is found in the cytoplasm. It catalyses the reaction L-lysyl-[protein] + 3 S-adenosyl-L-methionine = N(6),N(6),N(6)-trimethyl-L-lysyl-[protein] + 3 S-adenosyl-L-homocysteine + 3 H(+). In terms of biological role, methylates ribosomal protein L11. The chain is Ribosomal protein L11 methyltransferase from Erwinia tasmaniensis (strain DSM 17950 / CFBP 7177 / CIP 109463 / NCPPB 4357 / Et1/99).